The chain runs to 360 residues: MKASLLNKLEILQDRFEELTALLGDAEVISDQTRFRAYSREYAEVEPVYAAYKEWRKVQDDLEGAQALLKDSDPDLREMAVEEVREAKEQLLTLEAQLQRMLLPKDPNDGRNVFLEIRAGTGGDEAAIFSGDLFRMYSRYAEKRGWRLEILSENEGEHGGYKEIIARVEGENVYGKLKFESGAHRVQRVPETESQGRVHTSACTVAVLPEPDEQAAIEINPADLRVDTYRASGAGGQHVNKTDSAIRITHLPTGIVVECQEERSQHKNRARAMSWLSAKLNDMQTSAAQNALASERKLLVGSGDRSERIRTYNYPQGRVTDHRINLTLYSLDDILSGGVDAVIEPLLAEYQADQLAALGD.

Gln-237 carries the post-translational modification N5-methylglutamine.

Belongs to the prokaryotic/mitochondrial release factor family. In terms of processing, methylated by PrmC. Methylation increases the termination efficiency of RF1.

It localises to the cytoplasm. Its function is as follows. Peptide chain release factor 1 directs the termination of translation in response to the peptide chain termination codons UAG and UAA. The protein is Peptide chain release factor 1 of Pseudomonas putida (strain ATCC 47054 / DSM 6125 / CFBP 8728 / NCIMB 11950 / KT2440).